The following is a 203-amino-acid chain: Large ribosomal subunit protein bL25 (203 aa).

It belongs to the bacterial ribosomal protein bL25 family. CTC subfamily. Part of the 50S ribosomal subunit; part of the 5S rRNA/L5/L18/L25 subcomplex. Contacts the 5S rRNA. Binds to the 5S rRNA independently of L5 and L18.

Functionally, this is one of the proteins that binds to the 5S RNA in the ribosome where it forms part of the central protuberance. The sequence is that of Large ribosomal subunit protein bL25 from Pseudomonas syringae pv. tomato (strain ATCC BAA-871 / DC3000).